The primary structure comprises 295 residues: GATA transcription factor 18 (295 aa).

The segment at 148-202 (SLLARRCANCDTTSTPLWRNGPRGPKSLCNACGIRFKKEERRTTAATGNTVVGAA) adopts a GATA-type zinc-finger fold.

This sequence belongs to the type IV zinc-finger family. Class B subfamily. As to quaternary structure, homodimer. Forms heterodimers with GATA19, GATA22 and GATA21. Interacts with JAG. Binds to AGO10/PNH. In terms of tissue distribution, expressed in vegetative and inflorescence shoot apical meristems (SAMs), axillary (SAMs), floral meristems, developing ovules and stamens, vascular tissues, and in the embryo.

It is found in the nucleus. Functionally, transcriptional factor that specifically binds 5'-GATA-3' or 5'-GAT-3' motifs within gene promoters (including its own promoter and GATA21 promoter), thus regulating the expression of genes mostly involved in hormone responses and floral organ specification (including genes regulating hormones responses). Regulates both flower and shoot apical meristem (SAM) development, especially for establishing organ boundaries in shoots and flowers, probably by controlling the number and position of WUS-expressing cells. Coregulates, with AGO10/PNH, the shoot apical meristem (SAM) organization. Regulates floral organ development via the promotion of JAG and NPR5/BOP2 expression. Modulates cytokinin homeostasis in organ boundaries by regulating CKX3 expression. Involved in cell proliferation and differentiation. Required to position the inductive proembryo boundary via the regulation of gene expression and for early embryonic development. Together with GIF1/AN3, mediates cotyledon identity by preventing ectopic root formation through the repression of PLT1 expression. This is GATA transcription factor 18 from Arabidopsis thaliana (Mouse-ear cress).